Consider the following 493-residue polypeptide: 3-ketoacyl-CoA synthase 16 (493 aa).

Residues 1–35 (MDYPMKKVKIFFNYLMAHRFKLCFLPLMVAIAVEA) form the signal peptide. Residues 52–74 (NNHTSLTMFFLYLALGSTLYLMT) traverse the membrane as a helical segment. One can recognise an FAE domain in the interval 71-366 (YLMTRPKPVY…FFVRFVKKKF (296 aa)). Catalysis depends on residues Cys-221, His-300, His-384, His-388, His-417, and Asn-421.

The protein belongs to the thiolase-like superfamily. Chalcone/stilbene synthases family. As to expression, expressed in siliques.

The protein localises to the membrane. It carries out the reaction a very-long-chain acyl-CoA + malonyl-CoA + H(+) = a very-long-chain 3-oxoacyl-CoA + CO2 + CoA. Its pathway is lipid metabolism; fatty acid biosynthesis. The chain is 3-ketoacyl-CoA synthase 16 from Arabidopsis thaliana (Mouse-ear cress).